Reading from the N-terminus, the 214-residue chain is 3-isopropylmalate dehydratase small subunit (214 aa).

This sequence belongs to the LeuD family. LeuD type 1 subfamily. In terms of assembly, heterodimer of LeuC and LeuD.

It catalyses the reaction (2R,3S)-3-isopropylmalate = (2S)-2-isopropylmalate. The protein operates within amino-acid biosynthesis; L-leucine biosynthesis; L-leucine from 3-methyl-2-oxobutanoate: step 2/4. Its function is as follows. Catalyzes the isomerization between 2-isopropylmalate and 3-isopropylmalate, via the formation of 2-isopropylmaleate. The protein is 3-isopropylmalate dehydratase small subunit of Desulforapulum autotrophicum (strain ATCC 43914 / DSM 3382 / VKM B-1955 / HRM2) (Desulfobacterium autotrophicum).